Reading from the N-terminus, the 768-residue chain is Protein transport protein Sec23A (768 aa).

Threonine 2 carries the post-translational modification N-acetylthreonine. Zn(2+) contacts are provided by cysteine 61, cysteine 66, cysteine 85, and cysteine 88. Threonine 308 bears the Phosphothreonine mark. The Gelsolin-like repeat unit spans residues 632–718 (PEPVLLDSSS…EHGGSQARFL (87 aa)).

This sequence belongs to the SEC23/SEC24 family. SEC23 subfamily. As to quaternary structure, COPII is composed of at least five proteins: the Sec23/24 complex, the Sec13/31 complex and Sar1. Interacts with SEC23IP. Interacts with HTR4. Interacts with SEC16A. Interacts with SLC6A4. Interacts (as part of the Sec23/24 complex) with SEC22B; recruits SEC22B into COPII-coated vesicles and allows the transport of this cargo from the endoplasmic reticulum to the Golgi. Interacts (via Gelsolin-like repeat) with MIA2 and MIA3; specifically involved in the transport of large cargos like the collagen COL7A1. Interacts with DDHD1. Interacts with TMEM39A. Interacts with SACM1L; this interaction is reduced in the absence of TMEM39A. Interacts with kinase FAM20C; transport of FAM20C from the endoplasmic reticulum to the Golgi is likely to be mediated by COPII vesicles.

It is found in the cytoplasmic vesicle. The protein resides in the COPII-coated vesicle membrane. The protein localises to the endoplasmic reticulum membrane. Its subcellular location is the cytoplasm. It localises to the cytosol. Functionally, component of the coat protein complex II (COPII) which promotes the formation of transport vesicles from the endoplasmic reticulum (ER). The coat has two main functions, the physical deformation of the endoplasmic reticulum membrane into vesicles and the selection of cargo molecules for their transport to the Golgi complex. Required for the translocation of insulin-induced glucose transporter SLC2A4/GLUT4 to the cell membrane. This is Protein transport protein Sec23A from Bos taurus (Bovine).